The following is an 81-amino-acid chain: Relaxin-like protein AGF (81 aa).

Disulfide bonds link C14–C66, C26–C79, and C65–C70. Residue N37 is glycosylated (N-linked (GlcNAc...) asparagine).

This sequence belongs to the insulin family. As to quaternary structure, heterodimer of a B chain and an A chain linked by two disulfide bonds.

It localises to the secreted. Uncertain. The sequence is that of Relaxin-like protein AGF from Hypanus sabinus (Atlantic stingray).